We begin with the raw amino-acid sequence, 267 residues long: Phosphate import ATP-binding protein PstB (267 aa).

In terms of domain architecture, ABC transporter spans 21-262; it reads VAARNLDFYY…PSKQQTEDYI (242 aa). Position 53 to 60 (53 to 60) interacts with ATP; sequence GPSGCGKS.

This sequence belongs to the ABC transporter superfamily. Phosphate importer (TC 3.A.1.7) family. As to quaternary structure, the complex is composed of two ATP-binding proteins (PstB), two transmembrane proteins (PstC and PstA) and a solute-binding protein (PstS).

It is found in the cell inner membrane. The catalysed reaction is phosphate(out) + ATP + H2O = ADP + 2 phosphate(in) + H(+). Functionally, part of the ABC transporter complex PstSACB involved in phosphate import. Responsible for energy coupling to the transport system. This chain is Phosphate import ATP-binding protein PstB, found in Xanthomonas axonopodis pv. citri (strain 306).